The chain runs to 279 residues: Large ribosomal subunit protein uL2 (279 aa).

Residues 223–279 (TVRGSAMNPNDHPHGGGEGRSPVGMDAPRTPWGKRHMGVKTRNNKKSSTSMIVRRRK) form a disordered region. Over residues 254-267 (WGKRHMGVKTRNNK) the composition is skewed to basic residues.

It belongs to the universal ribosomal protein uL2 family. As to quaternary structure, part of the 50S ribosomal subunit. Forms a bridge to the 30S subunit in the 70S ribosome.

Its function is as follows. One of the primary rRNA binding proteins. Required for association of the 30S and 50S subunits to form the 70S ribosome, for tRNA binding and peptide bond formation. It has been suggested to have peptidyltransferase activity; this is somewhat controversial. Makes several contacts with the 16S rRNA in the 70S ribosome. The sequence is that of Large ribosomal subunit protein uL2 from Ureaplasma parvum serovar 3 (strain ATCC 27815 / 27 / NCTC 11736).